A 791-amino-acid polypeptide reads, in one-letter code: Putative DNA (cytosine-5)-methyltransferase CMT1 (791 aa).

The segment at 37-59 is disordered; sequence YQSKKTKLQAPTKKPANKGGKKE. One can recognise a BAH domain in the interval 79–199; sequence VLINLNDDVY…VPYLNFTSAD (121 aa). In terms of domain architecture, SAM-dependent MTase C5-type spans 225 to 768; that stretch reads KFLLDLYSGC…YAFGMASQGL (544 aa). The stretch at 308–333 forms a coiled coil; sequence VESISELEDEEVEENDDIDEASTGAE. Residues 339 to 404 enclose the Chromo domain; that stretch reads FEVEKFLGIM…DGFKSHLLPL (66 aa). C417 is a catalytic residue.

The protein belongs to the class I-like SAM-binding methyltransferase superfamily. C5-methyltransferase family. As to expression, expressed in flowers. Not detected in leaves, roots, seedlings and plants prior formation of flower buds.

Its subcellular location is the nucleus. The enzyme catalyses a 2'-deoxycytidine in DNA + S-adenosyl-L-methionine = a 5-methyl-2'-deoxycytidine in DNA + S-adenosyl-L-homocysteine + H(+). May be involved in the CpXpG methylation and in gene silencing. The chain is Putative DNA (cytosine-5)-methyltransferase CMT1 (CMT1) from Arabidopsis thaliana (Mouse-ear cress).